The sequence spans 539 residues: Chaperonin GroEL (539 aa).

ATP contacts are provided by residues 29-32 (TLGP), 86-90 (DGTTT), glycine 413, and aspartate 494.

It belongs to the chaperonin (HSP60) family. As to quaternary structure, forms a cylinder of 14 subunits composed of two heptameric rings stacked back-to-back. Interacts with the co-chaperonin GroES.

It localises to the cytoplasm. It carries out the reaction ATP + H2O + a folded polypeptide = ADP + phosphate + an unfolded polypeptide.. Together with its co-chaperonin GroES, plays an essential role in assisting protein folding. The GroEL-GroES system forms a nano-cage that allows encapsulation of the non-native substrate proteins and provides a physical environment optimized to promote and accelerate protein folding. This Finegoldia magna (strain ATCC 29328 / DSM 20472 / WAL 2508) (Peptostreptococcus magnus) protein is Chaperonin GroEL.